A 309-amino-acid chain; its full sequence is uncharacterized protein (309 aa).

Residues 23 to 43 (ALVLSSIVNILLLLLIYSTVF) form a helical membrane-spanning segment.

This sequence belongs to the chlamydial CPn_0593/CT_474/TC_0759 family.

The protein localises to the membrane. This is an uncharacterized protein from Chlamydia trachomatis serovar D (strain ATCC VR-885 / DSM 19411 / UW-3/Cx).